A 308-amino-acid chain; its full sequence is Probable plastid-lipid-associated protein 9, chloroplastic (308 aa).

The transit peptide at 1 to 55 directs the protein to the chloroplast; that stretch reads MALIQHGSVSGTSAVRLSFSSSVSPPSSSPPLSRVSLNFQSEKKSCYRRMICRAM.

Belongs to the PAP/fibrillin family.

It is found in the plastid. The protein localises to the chloroplast. Its subcellular location is the plastoglobule. The chain is Probable plastid-lipid-associated protein 9, chloroplastic (PAP9) from Arabidopsis thaliana (Mouse-ear cress).